The primary structure comprises 345 residues: Histidinol-phosphate aminotransferase (345 aa).

N6-(pyridoxal phosphate)lysine is present on Lys206.

This sequence belongs to the class-II pyridoxal-phosphate-dependent aminotransferase family. Histidinol-phosphate aminotransferase subfamily. Homodimer. Pyridoxal 5'-phosphate is required as a cofactor.

The enzyme catalyses L-histidinol phosphate + 2-oxoglutarate = 3-(imidazol-4-yl)-2-oxopropyl phosphate + L-glutamate. The protein operates within amino-acid biosynthesis; L-histidine biosynthesis; L-histidine from 5-phospho-alpha-D-ribose 1-diphosphate: step 7/9. This Bacteroides fragilis (strain ATCC 25285 / DSM 2151 / CCUG 4856 / JCM 11019 / LMG 10263 / NCTC 9343 / Onslow / VPI 2553 / EN-2) protein is Histidinol-phosphate aminotransferase.